Here is a 287-residue protein sequence, read N- to C-terminus: Flagellin (287 aa).

Belongs to the bacterial flagellin family.

It localises to the secreted. The protein localises to the bacterial flagellum. In terms of biological role, flagellin is the subunit protein which polymerizes to form the filaments of bacterial flagella. The sequence is that of Flagellin (flaA) from Listeria monocytogenes serovar 1/2a (strain ATCC BAA-679 / EGD-e).